We begin with the raw amino-acid sequence, 156 residues long: Endogenous retrovirus group K member 25 Pro protein (156 aa).

The Peptidase A2 domain maps to 21–96; sequence FEGLVDTGAD…IPLNLWGRDL (76 aa). D26 is an active-site residue. The region spanning 111–156 is the G-patch domain; sequence YSPTSQKIMTKMGYIPGKGLGKNEDGIKIPVEAKINQKREGIGYPF.

This sequence belongs to the peptidase A2 family. HERV class-II K(HML-2) subfamily. As to quaternary structure, active as a homodimer. Post-translationally, autoproteolytically processed at the N-terminus. Expected C-terminal autoprocessing not detected. The sequence shown is that of the processed Pro protein.

It catalyses the reaction Processing at the authentic HIV-1 PR recognition site and release of the mature p17 matrix and the p24 capsid protein, as a result of the cleavage of the -SQNY-|-PIVQ- cleavage site.. Retroviral proteases have roles in processing of the primary translation products and the maturation of the viral particle. Endogenous Pro proteins may have kept, lost or modified their original function during evolution. This endogenous protein has retained most of the characteristics of retroviral proteases. This chain is Endogenous retrovirus group K member 25 Pro protein (ERVK-25), found in Homo sapiens (Human).